The primary structure comprises 146 residues: 3-hydroxyacyl-[acyl-carrier-protein] dehydratase FabZ (146 aa).

Residue His49 is part of the active site.

Belongs to the thioester dehydratase family. FabZ subfamily.

It is found in the cytoplasm. It catalyses the reaction a (3R)-hydroxyacyl-[ACP] = a (2E)-enoyl-[ACP] + H2O. Functionally, involved in unsaturated fatty acids biosynthesis. Catalyzes the dehydration of short chain beta-hydroxyacyl-ACPs and long chain saturated and unsaturated beta-hydroxyacyl-ACPs. The sequence is that of 3-hydroxyacyl-[acyl-carrier-protein] dehydratase FabZ from Pseudomonas aeruginosa (strain LESB58).